The chain runs to 380 residues: Flap endonuclease 1 (380 aa).

The segment at 1–104 (MGIQGLAKLI…GELAKRSERR (104 aa)) is N-domain. Arginine 19 is subject to Symmetric dimethylarginine; by PRMT5. Mg(2+) is bound at residue aspartate 34. DNA-binding residues include arginine 47 and arginine 70. N6-acetyllysine is present on lysine 80. Position 86 (aspartate 86) interacts with Mg(2+). A symmetric dimethylarginine; by PRMT5 mark is found at arginine 100 and arginine 104. The segment at 122 to 253 (EVEKFTKRLV…KRAVDLIQKH (132 aa)) is I-domain. Mg(2+) is bound by residues glutamate 158, glutamate 160, aspartate 179, and aspartate 181. Glutamate 158 lines the DNA pocket. Serine 187 carries the post-translational modification Phosphoserine; by CDK2. Arginine 192 is subject to Symmetric dimethylarginine; by PRMT5. Phosphoserine is present on serine 197. DNA contacts are provided by glycine 231 and aspartate 233. Aspartate 233 lines the Mg(2+) pocket. 3 positions are modified to phosphoserine: serine 255, serine 293, and serine 335. Residues 327–380 (RLSKSRQGSTQGRLDDFFKVTGSLSSAKRKEPEPKGAAKKKAKTGAAGKFKRGK) are disordered. Threonine 336 is modified (phosphothreonine). The interval 336–344 (TQGRLDDFF) is interaction with PCNA. Lysine 354, lysine 375, lysine 377, and lysine 380 each carry N6-acetyllysine. Residues 363-380 (AAKKKAKTGAAGKFKRGK) are compositionally biased toward basic residues.

It belongs to the XPG/RAD2 endonuclease family. FEN1 subfamily. As to quaternary structure, interacts with PCNA. Three molecules of FEN1 bind to one PCNA trimer with each molecule binding to one PCNA monomer. PCNA stimulates the nuclease activity without altering cleavage specificity. The C-terminal domain binds EP300; can bind simultaneously to both PCNA and EP300. Interacts with DDX11; this interaction is direct and increases flap endonuclease activity of FEN1. Interacts with WDR4; regulating its endonuclease activity. Interacts with POLB. Requires Mg(2+) as cofactor. Post-translationally, acetylated by EP300. Acetylation inhibits both endonuclease and exonuclease activity. Acetylation also reduces DNA-binding activity but does not affect interaction with PCNA or EP300. In terms of processing, phosphorylation upon DNA damage induces relocalization to the nuclear plasma. Phosphorylation at Ser-187 by CDK2 occurs during late S-phase and results in dissociation from PCNA. Methylation at Arg-192 by PRMT5 impedes Ser-187 phosphorylation and increases interaction with PCNA.

It is found in the nucleus. Its subcellular location is the nucleolus. The protein localises to the nucleoplasm. It localises to the mitochondrion. Its function is as follows. Structure-specific nuclease with 5'-flap endonuclease and 5'-3' exonuclease activities involved in DNA replication and repair. During DNA replication, cleaves the 5'-overhanging flap structure that is generated by displacement synthesis when DNA polymerase encounters the 5'-end of a downstream Okazaki fragment. It enters the flap from the 5'-end and then tracks to cleave the flap base, leaving a nick for ligation. Also involved in the long patch base excision repair (LP-BER) pathway, by cleaving within the apurinic/apyrimidinic (AP) site-terminated flap. Acts as a genome stabilization factor that prevents flaps from equilibrating into structures that lead to duplications and deletions. Also possesses 5'-3' exonuclease activity on nicked or gapped double-stranded DNA, and exhibits RNase H activity. Also involved in replication and repair of rDNA and in repairing mitochondrial DNA. The sequence is that of Flap endonuclease 1 from Bos taurus (Bovine).